Consider the following 549-residue polypeptide: Chaperonin GroEL (549 aa).

Residues 29–32 (TLGP), Lys50, 86–90 (DGTTT), Gly414, 478–480 (NAA), and Asp494 each bind ATP.

The protein belongs to the chaperonin (HSP60) family. As to quaternary structure, forms a cylinder of 14 subunits composed of two heptameric rings stacked back-to-back. Interacts with the co-chaperonin GroES.

The protein localises to the cytoplasm. The enzyme catalyses ATP + H2O + a folded polypeptide = ADP + phosphate + an unfolded polypeptide.. Together with its co-chaperonin GroES, plays an essential role in assisting protein folding. The GroEL-GroES system forms a nano-cage that allows encapsulation of the non-native substrate proteins and provides a physical environment optimized to promote and accelerate protein folding. The polypeptide is Chaperonin GroEL (Psychrobacter cryohalolentis (strain ATCC BAA-1226 / DSM 17306 / VKM B-2378 / K5)).